Consider the following 253-residue polypeptide: 5'-nucleotidase SurE (253 aa).

A divalent metal cation contacts are provided by aspartate 8, aspartate 9, serine 40, and asparagine 93.

This sequence belongs to the SurE nucleotidase family. A divalent metal cation serves as cofactor.

Its subcellular location is the cytoplasm. It catalyses the reaction a ribonucleoside 5'-phosphate + H2O = a ribonucleoside + phosphate. Its function is as follows. Nucleotidase that shows phosphatase activity on nucleoside 5'-monophosphates. This chain is 5'-nucleotidase SurE, found in Methylobacterium nodulans (strain LMG 21967 / CNCM I-2342 / ORS 2060).